Consider the following 403-residue polypeptide: Na(+)-translocating NADH-quinone reductase subunit B (403 aa).

9 helical membrane-spanning segments follow: residues 56–76 (MMITVWLCTFPAMFFGMWNTG), 121–141 (AYFLPVYAVTFIVGGFWEVLF), 163–183 (ILPPSIPLWQVALGISFGVVI), 220–240 (WTAVDGFAGATSLSLAASGGI), 265–285 (TSTLAIAIGGLVLLITKIASW), 287–307 (IVSGVMLGMIGLSLLLNLIGS), 312–332 (MFAMPWYWHLVVGGFAFGMFF), 348–368 (WIFGALIGVMVVLIRVVNPAF), and 371–391 (GMMLAILFANLFAPLIDHFVV). At Thr-230 the chain carries FMN phosphoryl threonine.

This sequence belongs to the NqrB/RnfD family. Composed of six subunits; NqrA, NqrB, NqrC, NqrD, NqrE and NqrF. It depends on FMN as a cofactor.

Its subcellular location is the cell inner membrane. It carries out the reaction a ubiquinone + n Na(+)(in) + NADH + H(+) = a ubiquinol + n Na(+)(out) + NAD(+). NQR complex catalyzes the reduction of ubiquinone-1 to ubiquinol by two successive reactions, coupled with the transport of Na(+) ions from the cytoplasm to the periplasm. NqrA to NqrE are probably involved in the second step, the conversion of ubisemiquinone to ubiquinol. The sequence is that of Na(+)-translocating NADH-quinone reductase subunit B from Ectopseudomonas mendocina (strain ymp) (Pseudomonas mendocina).